Here is a 233-residue protein sequence, read N- to C-terminus: 7-cyano-7-deazaguanine synthase (233 aa).

ATP is bound at residue 7 to 17; it reads LSGGLDSAVTS. Positions 195, 206, 209, and 212 each coordinate Zn(2+).

The protein belongs to the QueC family. The cofactor is Zn(2+).

It catalyses the reaction 7-carboxy-7-deazaguanine + NH4(+) + ATP = 7-cyano-7-deazaguanine + ADP + phosphate + H2O + H(+). It functions in the pathway purine metabolism; 7-cyano-7-deazaguanine biosynthesis. Functionally, catalyzes the ATP-dependent conversion of 7-carboxy-7-deazaguanine (CDG) to 7-cyano-7-deazaguanine (preQ(0)). In Methanococcus maripaludis (strain DSM 14266 / JCM 13030 / NBRC 101832 / S2 / LL), this protein is 7-cyano-7-deazaguanine synthase.